Here is a 115-residue protein sequence, read N- to C-terminus: Type 3 secretion system chaperone YscG (115 aa).

It belongs to the YscG family. In terms of assembly, component of the heterodimeric YscE-YscG chaperone. The YscE-YscG chaperone forms a stable ternary complex with YscF/SctF.

Its subcellular location is the cytoplasm. Chaperone of the type III secretion system (T3SS), also called injectisome, which is used to inject bacterial effector proteins into eukaryotic host cells. Along with YscE, prevents premature polymerization of the YscF/SctF needle protein within the cytoplasm. Required for Yop secretion. In Yersinia enterocolitica, this protein is Type 3 secretion system chaperone YscG.